The primary structure comprises 235 residues: Probable inactive serine protease 37 (235 aa).

The signal sequence occupies residues 1–19; it reads MKFIFYLSVLTGTFLFADS. The Peptidase S1 domain maps to 20 to 233; sequence SVQKEDPAPY…YVSWIENTAK (214 aa). Disulfide bonds link cysteine 40-cysteine 56, cysteine 131-cysteine 198, and cysteine 163-cysteine 177.

It belongs to the peptidase S1 family.

The protein localises to the cytoplasmic vesicle. It localises to the secretory vesicle. Its subcellular location is the acrosome. The protein resides in the secreted. Functionally, plays a role in male fertility. May have a role in sperm migration or binding to zona-intact eggs. Involved in the activation of the proacrosin/acrosin system. The sequence is that of Probable inactive serine protease 37 from Macaca fascicularis (Crab-eating macaque).